We begin with the raw amino-acid sequence, 58 residues long: Photosystem II reaction center protein K (58 aa).

Residues 1-21 (MTVSYSIYLENSLHFGDALLA) constitute a propeptide that is removed on maturation. A helical membrane pass occupies residues 29-49 (IFDPIVDVMPVIPVFFLLLAF).

Belongs to the PsbK family. In terms of assembly, PSII is composed of 1 copy each of membrane proteins PsbA, PsbB, PsbC, PsbD, PsbE, PsbF, PsbH, PsbI, PsbJ, PsbK, PsbL, PsbM, PsbT, PsbX, PsbY, PsbZ, Psb30/Ycf12, at least 3 peripheral proteins of the oxygen-evolving complex and a large number of cofactors. It forms dimeric complexes.

It is found in the plastid. The protein localises to the chloroplast thylakoid membrane. Functionally, one of the components of the core complex of photosystem II (PSII). PSII is a light-driven water:plastoquinone oxidoreductase that uses light energy to abstract electrons from H(2)O, generating O(2) and a proton gradient subsequently used for ATP formation. It consists of a core antenna complex that captures photons, and an electron transfer chain that converts photonic excitation into a charge separation. This is Photosystem II reaction center protein K from Adiantum capillus-veneris (Maidenhair fern).